We begin with the raw amino-acid sequence, 104 residues long: Large ribosomal subunit protein uL24 (104 aa).

The protein belongs to the universal ribosomal protein uL24 family. In terms of assembly, part of the 50S ribosomal subunit.

One of two assembly initiator proteins, it binds directly to the 5'-end of the 23S rRNA, where it nucleates assembly of the 50S subunit. Its function is as follows. One of the proteins that surrounds the polypeptide exit tunnel on the outside of the subunit. The protein is Large ribosomal subunit protein uL24 of Clostridium beijerinckii (strain ATCC 51743 / NCIMB 8052) (Clostridium acetobutylicum).